The chain runs to 345 residues: MTGMSKFNKEITVFIFFLALVILWGLFANASADMKTPVDTKVPVDTKTPFQGKKVAGFFIEFEEGTTEPEVKDILENYNMTVNTIDYNSDIIPGRYYMILDRDRIMDIEELVDEVNLTIPIKKGSNYLVTVTEQAIEDKNFLAILEKNNLPVKKSVYCYIRLEDESENGSIPQKDAYQIANELEKNEKVLAASPDTRINHLLIEFEDGTTEQEVKSILEKYNTTMNTIEYDSNLQPERYYLVVDADKRMDVRNELGKDENWTDPIYHDIKKGNHYIITVTEQAIEDKNFLAMLEKNDLQVKNSVLCCITLGNESKNWIWESDERRIENELKMNEKVLTLLRCGST.

It belongs to the UPF0228 family.

The chain is UPF0228 protein MA_2656 from Methanosarcina acetivorans (strain ATCC 35395 / DSM 2834 / JCM 12185 / C2A).